The sequence spans 886 residues: Isoleucine--tRNA ligase (886 aa).

The 'HIGH' region motif lies at Pro-60–His-70. Residue Glu-546 participates in L-isoleucyl-5'-AMP binding. The short motif at Lys-587–Ser-591 is the 'KMSKS' region element. Lys-590 serves as a coordination point for ATP. 4 residues coordinate Zn(2+): Cys-856, Cys-859, Cys-870, and Cys-873.

This sequence belongs to the class-I aminoacyl-tRNA synthetase family. IleS type 1 subfamily. Monomer. Zn(2+) is required as a cofactor.

It localises to the cytoplasm. The enzyme catalyses tRNA(Ile) + L-isoleucine + ATP = L-isoleucyl-tRNA(Ile) + AMP + diphosphate. Catalyzes the attachment of isoleucine to tRNA(Ile). As IleRS can inadvertently accommodate and process structurally similar amino acids such as valine, to avoid such errors it has two additional distinct tRNA(Ile)-dependent editing activities. One activity is designated as 'pretransfer' editing and involves the hydrolysis of activated Val-AMP. The other activity is designated 'posttransfer' editing and involves deacylation of mischarged Val-tRNA(Ile). The sequence is that of Isoleucine--tRNA ligase from Mesomycoplasma hyopneumoniae (strain 232) (Mycoplasma hyopneumoniae).